The chain runs to 333 residues: Holliday junction branch migration complex subunit RuvB (333 aa).

Residues methionine 1–tyrosine 182 form a large ATPase domain (RuvB-L) region. ATP-binding positions include leucine 21, arginine 22, glycine 63, lysine 66, threonine 67, threonine 68, glutamate 129–phenylalanine 131, arginine 172, tyrosine 182, and arginine 219. Residue threonine 67 coordinates Mg(2+). Positions threonine 183 to glutamine 253 are small ATPAse domain (RuvB-S). The tract at residues lysine 256 to valine 333 is head domain (RuvB-H). DNA contacts are provided by arginine 311 and arginine 316.

Belongs to the RuvB family. In terms of assembly, homohexamer. Forms an RuvA(8)-RuvB(12)-Holliday junction (HJ) complex. HJ DNA is sandwiched between 2 RuvA tetramers; dsDNA enters through RuvA and exits via RuvB. An RuvB hexamer assembles on each DNA strand where it exits the tetramer. Each RuvB hexamer is contacted by two RuvA subunits (via domain III) on 2 adjacent RuvB subunits; this complex drives branch migration. In the full resolvosome a probable DNA-RuvA(4)-RuvB(12)-RuvC(2) complex forms which resolves the HJ.

The protein localises to the cytoplasm. It catalyses the reaction ATP + H2O = ADP + phosphate + H(+). Its function is as follows. The RuvA-RuvB-RuvC complex processes Holliday junction (HJ) DNA during genetic recombination and DNA repair, while the RuvA-RuvB complex plays an important role in the rescue of blocked DNA replication forks via replication fork reversal (RFR). RuvA specifically binds to HJ cruciform DNA, conferring on it an open structure. The RuvB hexamer acts as an ATP-dependent pump, pulling dsDNA into and through the RuvAB complex. RuvB forms 2 homohexamers on either side of HJ DNA bound by 1 or 2 RuvA tetramers; 4 subunits per hexamer contact DNA at a time. Coordinated motions by a converter formed by DNA-disengaged RuvB subunits stimulates ATP hydrolysis and nucleotide exchange. Immobilization of the converter enables RuvB to convert the ATP-contained energy into a lever motion, pulling 2 nucleotides of DNA out of the RuvA tetramer per ATP hydrolyzed, thus driving DNA branch migration. The RuvB motors rotate together with the DNA substrate, which together with the progressing nucleotide cycle form the mechanistic basis for DNA recombination by continuous HJ branch migration. Branch migration allows RuvC to scan DNA until it finds its consensus sequence, where it cleaves and resolves cruciform DNA. The protein is Holliday junction branch migration complex subunit RuvB of Bacillus cereus (strain G9842).